The sequence spans 1073 residues: Lon protease homolog, mitochondrial (1073 aa).

A mitochondrion-targeting transit peptide spans 1-27 (MIKASKCNKARALFLVRTSIPRTFIRN). Composition is skewed to basic and acidic residues over residues 69 to 107 (FDSK…RKDI) and 113 to 123 (YDIKEETDSKP). The tract at residues 69 to 173 (FDSKKEKQPS…DKEFLSPSDA (105 aa)) is disordered. Positions 132-150 (SSKSSISSSSGGANNNNNN) are enriched in low complexity. Residues 158-167 (DDGSPKDKEF) are compositionally biased toward basic and acidic residues. Residues 177–395 (PPFLAIAMKD…LSLQLLQVEA (219 aa)) form the Lon N-terminal domain. 543–550 (GPPGTGKT) is a binding site for ATP. Over residues 775 to 785 (SVISDKAKKDA) the composition is skewed to basic and acidic residues. The tract at residues 775–821 (SVISDKAKKDAGSSSIESNDSNTEAKVSTTTENEKKQEQKQKQDEEI) is disordered. The span at 790 to 805 (IESNDSNTEAKVSTTT) shows a compositional bias: polar residues. A compositionally biased stretch (basic and acidic residues) spans 806 to 821 (ENEKKQEQKQKQDEEI). The region spanning 856 to 1044 (TLNPGVATGL…SEVFEHLFKG (189 aa)) is the Lon proteolytic domain. Catalysis depends on residues serine 950 and lysine 993.

Belongs to the peptidase S16 family. As to quaternary structure, homohexamer or homoheptamer. Organized in a ring with a central cavity.

The protein resides in the mitochondrion matrix. The enzyme catalyses Hydrolysis of proteins in presence of ATP.. ATP-dependent serine protease that mediates the selective degradation of misfolded, unassembled or oxidatively damaged polypeptides as well as certain short-lived regulatory proteins in the mitochondrial matrix. May also have a chaperone function in the assembly of inner membrane protein complexes. Participates in the regulation of mitochondrial gene expression and in the maintenance of the integrity of the mitochondrial genome. Binds to mitochondrial DNA in a site-specific manner. This Candida dubliniensis (strain CD36 / ATCC MYA-646 / CBS 7987 / NCPF 3949 / NRRL Y-17841) (Yeast) protein is Lon protease homolog, mitochondrial.